Here is a 320-residue protein sequence, read N- to C-terminus: Chorion protein S36 (320 aa).

A signal peptide spans 1–18 (MNCFLFTLFFVAAPLATA). Repeat copies occupy residues 178-181 (AAPV), 258-261 (AAPA), 266-269 (AAPA), 274-277 (AAPA), and alanine 290. The interval 259-320 (APAQSYNAAP…YGSAPPASGY (62 aa)) is disordered.

The protein belongs to the chorion protein S36 family.

It localises to the secreted. Chorion membrane (egg shell) protein; plays a role in protecting the egg from the environment. This Ceratitis capitata (Mediterranean fruit fly) protein is Chorion protein S36 (Cp36).